A 128-amino-acid polypeptide reads, in one-letter code: Large-conductance mechanosensitive channel (128 aa).

Transmembrane regions (helical) follow at residues 10–30 and 76–96; these read FAMRGNVVDMAVGVIIGGAFG and GMFIQNVFDFIIIAFAIFLMI.

The protein belongs to the MscL family. As to quaternary structure, homopentamer.

It localises to the cell inner membrane. Its function is as follows. Channel that opens in response to stretch forces in the membrane lipid bilayer. May participate in the regulation of osmotic pressure changes within the cell. The protein is Large-conductance mechanosensitive channel of Actinobacillus succinogenes (strain ATCC 55618 / DSM 22257 / CCUG 43843 / 130Z).